The following is a 295-amino-acid chain: Secreted frizzled-related protein 2 (295 aa).

The first 24 residues, 1-24 (MLQGPGSLLLLFLASHCCLGSARG), serve as a signal peptide directing secretion. Residues 35–155 (YKRSNCKPIP…PQDNDLCIPL (121 aa)) form the FZ domain. 8 cysteine pairs are disulfide-bonded: C40–C103, C50–C96, C87–C125, C114–C152, C118–C142, C172–C245, C175–C247, and C190–C295. The 124-residue stretch at 172–295 (CEACKNKNDD…ISRSIRKLQC (124 aa)) folds into the NTR domain.

It belongs to the secreted frizzled-related protein (sFRP) family. In terms of tissue distribution, expressed in adipose tissue, heart, brain, skeletal muscle, pancreas, thymus, prostate, testis, ovary, small intestine and colon. Highest levels in adipose tissue, small intestine and colon.

Its subcellular location is the secreted. Its function is as follows. Soluble frizzled-related proteins (sFRPS) function as modulators of Wnt signaling through direct interaction with Wnts. They have a role in regulating cell growth and differentiation in specific cell types. SFRP2 may be important for eye retinal development and for myogenesis. The sequence is that of Secreted frizzled-related protein 2 (SFRP2) from Homo sapiens (Human).